Here is a 458-residue protein sequence, read N- to C-terminus: Bifunctional protein GlmU (458 aa).

A pyrophosphorylase region spans residues M1–R229. Residues L11 to G14, K25, Q76, G81 to T82, Y103 to D105, G140, E154, N169, and N227 contribute to the UDP-N-acetyl-alpha-D-glucosamine site. Residue D105 coordinates Mg(2+). N227 lines the Mg(2+) pocket. A linker region spans residues Q230–A250. The tract at residues G251–K458 is N-acetyltransferase. 2 residues coordinate UDP-N-acetyl-alpha-D-glucosamine: R333 and K351. The Proton acceptor role is filled by H363. UDP-N-acetyl-alpha-D-glucosamine-binding residues include Y366 and N377. Acetyl-CoA is bound by residues A380, N386–Y387, S405, A423, and R440.

In the N-terminal section; belongs to the N-acetylglucosamine-1-phosphate uridyltransferase family. It in the C-terminal section; belongs to the transferase hexapeptide repeat family. Homotrimer. Mg(2+) is required as a cofactor.

Its subcellular location is the cytoplasm. The catalysed reaction is alpha-D-glucosamine 1-phosphate + acetyl-CoA = N-acetyl-alpha-D-glucosamine 1-phosphate + CoA + H(+). It catalyses the reaction N-acetyl-alpha-D-glucosamine 1-phosphate + UTP + H(+) = UDP-N-acetyl-alpha-D-glucosamine + diphosphate. It participates in nucleotide-sugar biosynthesis; UDP-N-acetyl-alpha-D-glucosamine biosynthesis; N-acetyl-alpha-D-glucosamine 1-phosphate from alpha-D-glucosamine 6-phosphate (route II): step 2/2. Its pathway is nucleotide-sugar biosynthesis; UDP-N-acetyl-alpha-D-glucosamine biosynthesis; UDP-N-acetyl-alpha-D-glucosamine from N-acetyl-alpha-D-glucosamine 1-phosphate: step 1/1. The protein operates within bacterial outer membrane biogenesis; LPS lipid A biosynthesis. Functionally, catalyzes the last two sequential reactions in the de novo biosynthetic pathway for UDP-N-acetylglucosamine (UDP-GlcNAc). The C-terminal domain catalyzes the transfer of acetyl group from acetyl coenzyme A to glucosamine-1-phosphate (GlcN-1-P) to produce N-acetylglucosamine-1-phosphate (GlcNAc-1-P), which is converted into UDP-GlcNAc by the transfer of uridine 5-monophosphate (from uridine 5-triphosphate), a reaction catalyzed by the N-terminal domain. This is Bifunctional protein GlmU from Pasteurella multocida (strain Pm70).